We begin with the raw amino-acid sequence, 600 residues long: Aspartate--tRNA(Asp/Asn) ligase (600 aa).

L-aspartate is bound at residue glutamate 174. Residues 198-201 (QLFK) form an aspartate region. Residue arginine 220 coordinates L-aspartate. Residues 220–222 (RDE) and glutamine 229 contribute to the ATP site. Position 457 (histidine 457) interacts with L-aspartate. Residue glutamate 491 coordinates ATP. An L-aspartate-binding site is contributed by arginine 498. 543–546 (GLDR) is a binding site for ATP.

The protein belongs to the class-II aminoacyl-tRNA synthetase family. Type 1 subfamily. Homodimer.

It is found in the cytoplasm. The catalysed reaction is tRNA(Asx) + L-aspartate + ATP = L-aspartyl-tRNA(Asx) + AMP + diphosphate. In terms of biological role, aspartyl-tRNA synthetase with relaxed tRNA specificity since it is able to aspartylate not only its cognate tRNA(Asp) but also tRNA(Asn). Reaction proceeds in two steps: L-aspartate is first activated by ATP to form Asp-AMP and then transferred to the acceptor end of tRNA(Asp/Asn). In Burkholderia lata (strain ATCC 17760 / DSM 23089 / LMG 22485 / NCIMB 9086 / R18194 / 383), this protein is Aspartate--tRNA(Asp/Asn) ligase.